The primary structure comprises 257 residues: Outer membrane protein YaiO (257 aa).

An N-terminal signal peptide occupies residues 1-19; the sequence is MIKRTLLAAAIFSALPAYA.

The protein resides in the cell outer membrane. The sequence is that of Outer membrane protein YaiO (yaiO) from Escherichia coli (strain K12).